Reading from the N-terminus, the 440-residue chain is Sequestosome-1 (440 aa).

The residue at position 2 (A2) is an N-acetylalanine. The segment at 2-50 (ASLTVKAYLLGKEDAAREIRRFSFCCSPEPEAEAEAAAGPGPCERLLSR) is interaction with LCK. The 100-residue stretch at 3–102 (SLTVKAYLLG…DIFRIYIKEK (100 aa)) folds into the PB1 domain. A Phosphoserine modification is found at S24. Positions 43-107 (PCERLLSRVA…YIKEKKECRR (65 aa)) are interaction with PRKCZ and dimerization. The interval 50–80 (RVAALFPALRPGGFQAHYRDEDGDLVAFSSD) is interaction with PAWR. K91 is covalently cross-linked (Glycyl lysine isopeptide (Lys-Gly) (interchain with G-Cter in ubiquitin)). The segment at 122–224 (VHPNVICDGC…EARPGPTAES (103 aa)) is interaction with GABRR3. Residues 123–173 (HPNVICDGCNGPVVGTRYKCSVCPDYDLCSVCEGKGLHRGHTKLAFPSPFG) form a ZZ-type zinc finger. The Zn(2+) site is built by C128, C131, C142, and C145. Y148 bears the Phosphotyrosine mark. Positions 151, 154, 160, and 163 each coordinate Zn(2+). Phosphoserine occurs at positions 170 and 176. Residues 170 to 220 (SPFGHLSEGFSHSRWLRKVKHGHFGWPGWEMGPPGNWSPRPPRAGEARPGP) form an LIM protein-binding (LB) region. Residue K189 forms a Glycyl lysine isopeptide (Lys-Gly) (interchain with G-Cter in ubiquitin) linkage. The interval 196 to 235 (PGWEMGPPGNWSPRPPRAGEARPGPTAESASGPSEDPSVN) is disordered. Phosphoserine occurs at positions 207, 233, 249, and 266. A TRAF6-binding motif is present at residues 228 to 233 (PSEDPS). Positions 264–390 (KRSRLTPVSP…ALYPHLPPEA (127 aa)) are disordered. T269 carries the post-translational modification Phosphothreonine. An interaction with NTRK1 region spans residues 269-440 (TPVSPESSST…IQYSKHPPPL (172 aa)). Phosphoserine occurs at positions 272 and 282. Positions 283-296 (SSQPSSCCSDPSKP) are enriched in low complexity. Residues C289 and C290 are each lipidated (S-palmitoyl cysteine). A Phosphoserine modification is found at S306. A compositionally biased stretch (basic and acidic residues) spans 310–324 (QMRKIALESEGRPEE). Positions 321 to 342 (RPEEQMESDNCSGGDDDWTHLS) are MAP1LC3B-binding. Phosphoserine occurs at positions 328 and 332. Residues 336 to 341 (DDWTHL) carry the LIR motif. The span at 337–347 (DWTHLSSKEVD) shows a compositional bias: basic and acidic residues. An interaction with KEAP1 region spans residues 347–352 (DPSTGE). Position 349 is a phosphoserine; by ULK1 (S349). Residues 351–373 (GELQSLQMPESEGPSSLDPSQEG) are compositionally biased toward polar residues. Phosphoserine is present on residues S355, S361, S365, and S366. The region spanning 389 to 434 (EADPRLIESLSQMLSMGFSDEGGWLTRLLQTKNYDIGAALDTIQYS) is the UBA domain. S403 carries the post-translational modification Phosphoserine; by CK2, ULK1 and TBK1. S407 is subject to Phosphoserine; by ULK1. Residues K420 and K435 each carry the N6-acetyllysine; alternate modification. K420 is covalently cross-linked (Glycyl lysine isopeptide (Lys-Gly) (interchain with G-Cter in ubiquitin); alternate). K435 is covalently cross-linked (Glycyl lysine isopeptide (Lys-Gly) (interchain with G-Cter in SUMO2); alternate).

Homooligomer or heterooligomer; may form homotypic arrays. Dimerization interferes with ubiquitin binding. Component of a ternary complex with PAWR and PRKCZ. Forms a complex with JUB/Ajuba, PRKCZ and TRAF6. Identified in a complex with TRAF6 and CYLD. Identified in a heterotrimeric complex with ubiquitin and ZFAND5, where ZFAND5 and SQSTM1 both interact with the same ubiquitin molecule. Interacts (via LIR motif) with MAP1LC3A and MAP1LC3B, as well as with other ATG8 family members, including GABARAP, GABARAPL1 and GABARAPL2; these interactions are necessary for the recruitment MAP1 LC3 family members to inclusion bodies containing polyubiquitinated protein aggregates and for their degradation by autophagy. Interacts directly with PRKCI and PRKCZ. Interacts with EBI3, LCK, RASA1, NR2F2, NTRK1, NTRK2, NTRK3, NBR1, MAP2K5 and MAPKAPK5. Upon TNF-alpha stimulation, interacts with RIPK1 probably bridging IKBKB to the TNF-R1 complex composed of TNF-R1/TNFRSF1A, TRADD and RIPK1. Interacts with the proteasome subunits PSMD4 and PSMC2. Interacts with TRAF6. Interacts with 'Lys-63'-linked polyubiquitinated MAPT/TAU. Interacts with FHOD3. Interacts with CYLD. Interacts with SESN1. Interacts with SESN2. Interacts with ULK1. Interacts with UBD. Interacts with WDR81; the interaction is direct and regulates the interaction of SQSTM1 with ubiquitinated proteins. Interacts with WDFY3; this interaction is required to recruit WDFY3 to cytoplasmic bodies and to PML bodies. Interacts with LRRC25. Interacts with STING1; leading to relocalization of STING1 to autophagosomes. Interacts (when phosphorylated at Ser-349) with KEAP1; the interaction is direct and inactivates the BCR(KEAP1) complex by sequestering KEAP1 in inclusion bodies, promoting its degradation. Interacts with MOAP1; promoting dissociation of SQSTM1 inclusion bodies that sequester KEAP1. Interacts with GBP1. Interacts with TAX1BP1. Interacts with (ubiquitinated) PEX5; specifically binds PEX5 ubiquitinated at 'Lys-209' in response to reactive oxygen species (ROS). Interacts (via PB1 domain) with TNS2; the interaction leads to sequestration of TNS2 in cytoplasmic aggregates with SQSTM1 and promotes TNS2 ubiquitination and proteasomal degradation. Interacts with IRS1; the interaction is disrupted by the presence of tensin TNS2. Interacts with TRIM5. Interacts with TRIM11 (when ubiquitinated); promoting AIM2 recruitment to autophagosomes and autophagy-dependent degradation of AIM2. Interacts with TRIM13. Interacts with TRIM16. Interacts with TRIM23. Interacts with TRIM50. Interacts with TRIM55. Interacts with ECSIT; this interaction inhibits TLR4 signaling via functional regulation of the TRAF6-ECSIT complex. Interacts with GABRR1, GABRR2 and GABRR3. Interacts with WDR83. Interacts with GRB2. Interacts with USP12; the interaction is independent of USP12 deubiquitinase activity and may be involved in regulation of autophagic flux. Interacts with ASB6. Post-translationally, phosphorylation at Ser-407 by ULK1 destabilizes the UBA dimer interface and increases binding affinity to ubiquitinated proteins. Phosphorylation at Ser-407 also primes for subsequent phosphorylation at Ser-403. Phosphorylation at Ser-403 by CK2 or ULK1 promotes binding to ubiquitinated proteins by increasing the affinity between the UBA domain and polyubiquitin chains. Phosphorylation at Ser-403 by ULK1 is stimulated by SESN2. Phosphorylated at Ser-403 by TBK1, leading to promote relocalization of 'Lys-63'-linked ubiquitinated STING1 to autophagosomes. Phosphorylation at Ser-349 by ULK1 promotes interaction with KEAP1 and inactivation of the BCR(KEAP1) complex, promoting NFE2L2/NRF2 nuclear accumulation and expression of phase II detoxifying enzymes. Phosphorylated in vitro by TTN. In terms of processing, ubiquitinated by UBE2J1 and RNF26 at Lys-435: ubiquitinated SQSTM1 attracts specific vesicle-associated adapters, forming a molecular bridge that restrains cognate vesicles in the perinuclear region and organizes the endosomal pathway for efficient cargo transport. Ubiquitination by UBE2D2 and UBE2D3 increases its ability to bind polyubiquitin chains by destabilizing the UBA dimer interface. Deubiquitination by USP15 releases target vesicles for fast transport into the cell periphery. Ubiquitinated by the BCR(KEAP1) complex at Lys-420, increasing SQSTM1 sequestering activity and promoting its degradation. Ubiquitinated via 'Lys-29' and 'Lys-33'-linked polyubiquitination leading to xenophagic targeting of bacteria and inhibition of their replication. Acetylated at Lys-420 and Lys-435 by KAT5/TIP60, promotes activity by destabilizing the UBA dimer interface and increases binding affinity to ubiquitinated proteins. Deacetylated by HDAC6. Post-translationally, palmitoylation at Cys-289 and Cys-290 by ZDHHC19 is required for efficient autophagic degradation of SQSTM1-cargo complexes by promoting affinity for ATG8 proteins and recruitment of p62 bodies to autophagosomes. Dealmitoylated at Cys-289 and Cys-290 by LYPLA1. In terms of processing, (Microbial infection) Cleaved by S.pyogenes SpeB protease; leading to its degradation. Degradation by SpeB prevents autophagy, promoting to S.pyogenes intracellular replication. (Microbial infection) Deubiquitinated by Epstein-Barr virus BPLF1; leading to inhibition of the recruitment of MAP1LC3A/LC3 to SQSTM1-positive structures. Ubiquitously expressed.

It is found in the cytoplasmic vesicle. The protein localises to the autophagosome. It localises to the preautophagosomal structure. Its subcellular location is the cytoplasm. The protein resides in the cytosol. It is found in the nucleus. The protein localises to the PML body. It localises to the late endosome. Its subcellular location is the lysosome. The protein resides in the endoplasmic reticulum. It is found in the myofibril. The protein localises to the sarcomere. Functionally, molecular adapter required for selective macroautophagy (aggrephagy) by acting as a bridge between polyubiquitinated proteins and autophagosomes. Promotes the recruitment of ubiquitinated cargo proteins to autophagosomes via multiple domains that bridge proteins and organelles in different steps. SQSTM1 first mediates the assembly and removal of ubiquitinated proteins by undergoing liquid-liquid phase separation upon binding to ubiquitinated proteins via its UBA domain, leading to the formation of insoluble cytoplasmic inclusions, known as p62 bodies. SQSTM1 then interacts with ATG8 family proteins on autophagosomes via its LIR motif, leading to p62 body recruitment to autophagosomes, followed by autophagic clearance of ubiquitinated proteins. SQSTM1 is itself degraded along with its ubiquitinated cargos. Also required to recruit ubiquitinated proteins to PML bodies in the nucleus. Also involved in autophagy of peroxisomes (pexophagy) in response to reactive oxygen species (ROS) by acting as a bridge between ubiquitinated PEX5 receptor and autophagosomes. Acts as an activator of the NFE2L2/NRF2 pathway via interaction with KEAP1: interaction inactivates the BCR(KEAP1) complex by sequestering the complex in inclusion bodies, promoting nuclear accumulation of NFE2L2/NRF2 and subsequent expression of cytoprotective genes. Promotes relocalization of 'Lys-63'-linked ubiquitinated STING1 to autophagosomes. Involved in endosome organization by retaining vesicles in the perinuclear cloud: following ubiquitination by RNF26, attracts specific vesicle-associated adapters, forming a molecular bridge that restrains cognate vesicles in the perinuclear region and organizes the endosomal pathway for efficient cargo transport. Sequesters tensin TNS2 into cytoplasmic puncta, promoting TNS2 ubiquitination and proteasomal degradation. May regulate the activation of NFKB1 by TNF-alpha, nerve growth factor (NGF) and interleukin-1. May play a role in titin/TTN downstream signaling in muscle cells. Adapter that mediates the interaction between TRAF6 and CYLD. The chain is Sequestosome-1 from Homo sapiens (Human).